Consider the following 408-residue polypeptide: Argininosuccinate synthase (408 aa).

14–22 is a binding site for ATP; that stretch reads AYSGGLDTS. Residues Tyr92 and Ser97 each coordinate L-citrulline. An ATP-binding site is contributed by Gly122. L-aspartate-binding residues include Thr124, Asn128, and Asp129. Asn128 lines the L-citrulline pocket. Positions 132, 181, 190, 266, and 278 each coordinate L-citrulline.

Belongs to the argininosuccinate synthase family. Type 1 subfamily. As to quaternary structure, homotetramer.

Its subcellular location is the cytoplasm. It catalyses the reaction L-citrulline + L-aspartate + ATP = 2-(N(omega)-L-arginino)succinate + AMP + diphosphate + H(+). It functions in the pathway amino-acid biosynthesis; L-arginine biosynthesis; L-arginine from L-ornithine and carbamoyl phosphate: step 2/3. The sequence is that of Argininosuccinate synthase from Moorella thermoacetica (strain ATCC 39073 / JCM 9320).